A 228-amino-acid polypeptide reads, in one-letter code: Protein-L-isoaspartate O-methyltransferase (228 aa).

The tract at residues 1–20 is disordered; that stretch reads MVAVSLKMSQPAAPPPPMGE. Residue Ser-76 is part of the active site.

This sequence belongs to the methyltransferase superfamily. L-isoaspartyl/D-aspartyl protein methyltransferase family.

The protein localises to the cytoplasm. It catalyses the reaction [protein]-L-isoaspartate + S-adenosyl-L-methionine = [protein]-L-isoaspartate alpha-methyl ester + S-adenosyl-L-homocysteine. In terms of biological role, catalyzes the methyl esterification of L-isoaspartyl residues in peptides and proteins that result from spontaneous decomposition of normal L-aspartyl and L-asparaginyl residues. It plays a role in the repair and/or degradation of damaged proteins. This Magnetococcus marinus (strain ATCC BAA-1437 / JCM 17883 / MC-1) protein is Protein-L-isoaspartate O-methyltransferase.